The primary structure comprises 355 residues: Anthranilate phosphoribosyltransferase (355 aa).

Residues G102, 105-106 (GD), S110, 112-115 (NIST), 130-138 (KHGNRSVSS), and S142 contribute to the 5-phospho-alpha-D-ribose 1-diphosphate site. Residue G102 coordinates anthranilate. S114 contacts Mg(2+). N133 contributes to the anthranilate binding site. Anthranilate is bound at residue R188. The Mg(2+) site is built by D246 and E247.

It belongs to the anthranilate phosphoribosyltransferase family. Homodimer. Mg(2+) serves as cofactor.

The catalysed reaction is N-(5-phospho-beta-D-ribosyl)anthranilate + diphosphate = 5-phospho-alpha-D-ribose 1-diphosphate + anthranilate. It participates in amino-acid biosynthesis; L-tryptophan biosynthesis; L-tryptophan from chorismate: step 2/5. Functionally, catalyzes the transfer of the phosphoribosyl group of 5-phosphorylribose-1-pyrophosphate (PRPP) to anthranilate to yield N-(5'-phosphoribosyl)-anthranilate (PRA). In Pectobacterium carotovorum subsp. carotovorum (strain PC1), this protein is Anthranilate phosphoribosyltransferase.